Reading from the N-terminus, the 263-residue chain is MKAVVLAVAVLFLTGSQARHFWQRDDPQTSWDRVRDFATVYVDAVKESGRDYVAQLEASLGKHLNLKLLDNWDTLSTTFSKLRSELGPVTQEFWDNLEKDTEWLRQEMNKDLVEVKEKVQPYLKNFQEKVQLELEHYRKKVEPLGTDLRDGARQKLQELQEKLTPLGEDLRDRARQHVDELRAQLGPYSDQMRQRLTQRLEALKDSASLAEYQAKAQEHLKTFSEKAKPALEDLRLGLLPVLESLKASFLSSIDEVSKKLSAQ.

An N-terminal signal peptide occupies residues 1 to 18; the sequence is MKAVVLAVAVLFLTGSQA. Repeat copies occupy residues 66–87 and 88–109. The tract at residues 66–263 is 10 X approximate tandem repeats; sequence LKLLDNWDTL…DEVSKKLSAQ (198 aa). Met108 carries the post-translational modification Methionine sulfoxide. A 3; half-length repeat occupies 110–120; that stretch reads KDLVEVKEKVQ. 5 consecutive repeat copies span residues 121 to 142, 143 to 164, 165 to 186, 187 to 206, and 207 to 228. Residues 229-239 form a 9; half-length repeat; the sequence is PALEDLRLGLL. Residues 240–263 form repeat 10; it reads PVLESLKASFLSSIDEVSKKLSAQ.

It belongs to the apolipoprotein A1/A4/E family. As to quaternary structure, homodimer. Interacts with APOA1BP and CLU. Component of a sperm activating protein complex (SPAP), consisting of APOA1, an immunoglobulin heavy chain, an immunoglobulin light chain and albumin. Interacts with NDRG1. Interacts with SCGB3A2. Interacts with NAXE and YJEFN3. Post-translationally, glycosylated. Palmitoylated. In terms of processing, phosphorylation sites are present in the extracellular medium.

The protein localises to the secreted. Participates in the reverse transport of cholesterol from tissues to the liver for excretion by promoting cholesterol efflux from tissues and by acting as a cofactor for the lecithin cholesterol acyltransferase (LCAT). As part of the SPAP complex, activates spermatozoa motility. This Octodon degus (Degu) protein is Apolipoprotein A-I (APOA1).